The following is a 253-amino-acid chain: 5'/3'-nucleotidase SurE (253 aa).

A divalent metal cation contacts are provided by D8, D9, S39, and N92.

This sequence belongs to the SurE nucleotidase family. Requires a divalent metal cation as cofactor.

It localises to the cytoplasm. The catalysed reaction is a ribonucleoside 5'-phosphate + H2O = a ribonucleoside + phosphate. The enzyme catalyses a ribonucleoside 3'-phosphate + H2O = a ribonucleoside + phosphate. It carries out the reaction [phosphate](n) + H2O = [phosphate](n-1) + phosphate + H(+). Functionally, nucleotidase with a broad substrate specificity as it can dephosphorylate various ribo- and deoxyribonucleoside 5'-monophosphates and ribonucleoside 3'-monophosphates with highest affinity to 3'-AMP. Also hydrolyzes polyphosphate (exopolyphosphatase activity) with the preference for short-chain-length substrates (P20-25). Might be involved in the regulation of dNTP and NTP pools, and in the turnover of 3'-mononucleotides produced by numerous intracellular RNases (T1, T2, and F) during the degradation of various RNAs. The polypeptide is 5'/3'-nucleotidase SurE (Escherichia coli O127:H6 (strain E2348/69 / EPEC)).